The primary structure comprises 2147 residues: Probable serine/threonine-protein kinase roco6 (2147 aa).

Topologically, residues 1–1055 (MNSIHKQHYT…LDHSRVEFNR (1055 aa)) are extracellular. LRR repeat units lie at residues 69-89 (DMKYLDLSKRMIYSLELMMIP), 101-122 (SISILNLNDNLLGEIPESLKQL), 124-145 (QLISLSIRGNHILEIPLWFPEE), 148-169 (LLRKLDVSHNAISSVPNTFNKF), 171-192 (ILEDLNLSNNYISYIHPSLFPE), 193-214 (GIMRLNLSNNLFREVELPPWFE), 215-236 (SLLTLDISGNKLKHLGNLPFHL), 237-256 (VRVSIDDNHLESIDHKVILR), 306-328 (HLTHLDLSGNCISVLPPELANLT), 329-350 (ELVRLDLSFNILTTLPLYIVSY), and 352-372 (RLEHLDLQGTLDTLVSPPRRI). The Roc domain maps to 390–750 (QGEPSYRVKL…DLLKKTVVEL (361 aa)). Residues 390–750 (QGEPSYRVKL…DLLKKTVVEL (361 aa)) are small GTPase-like. 403–410 (GQENVGKT) is a GTP binding site. Disordered regions lie at residues 491-582 (NSNG…VGTN) and 602-621 (SNLSIGGSNGNNNNNSGGSG). Composition is skewed to low complexity over residues 492 to 512 (SNGVNSNSQININSSSGNIHS), 519 to 531 (NVNSSGGIHSNNS), 539 to 568 (NSFLNNTNSNGTNNNSSNLNINTNSNNVNS), and 602 to 617 (SNLSIGGSNGNNNNNS). Residues 634–638 (DCAGQ) and 691–694 (THLD) contribute to the GTP site. The COR domain maps to 758–892 (PELYLKLEKL…RFELMFPLDS (135 aa)). Composition is skewed to low complexity over residues 905–941 (GNSYVNNNNNNNNNSNNNNNGSNKSSPFKTTPSSPST) and 960–977 (SGNNSSSKNSTSTKRSIS). The interval 905 to 995 (GNSYVNNNNN…NSDLDLIGGG (91 aa)) is disordered. The WD 1 repeat unit spans residues 1051 to 1098 (VEFNRWIQLSFAPAGLFSRLLIRLLISKEFDMKPILYWRNGVVVESQS). A helical membrane pass occupies residues 1056 to 1076 (WIQLSFAPAGLFSRLLIRLLI). The Cytoplasmic portion of the chain corresponds to 1077–2147 (SKEFDMKPIL…CGTNNVCIWS (1071 aa)). LRR repeat units lie at residues 1237–1263 (ILSIKPASFGNNQIQFEVRVPPSPPPP), 1274–1297 (DDNITTTTLAVNNIKVLESGGSQP), and 1325–1348 (ESSLIQVEFDHNNQTLVISGTYKY). The Protein kinase domain occupies 1356–1627 (FESPKLIGRG…KIVKRIKQII (272 aa)). ATP is bound by residues 1362–1370 (IGRGASGKI) and lysine 1383. Aspartate 1481 serves as the catalytic Proton acceptor. Positions 1653–1699 (ADSQPFHYHQQQQPSLNSTNQLQQQQYSSVLTSPRSNLSDSSNSSQN) are disordered. Low complexity predominate over residues 1662-1699 (QQQQPSLNSTNQLQQQQYSSVLTSPRSNLSDSSNSSQN). WD repeat units follow at residues 1735-1774 (QPEAKVNQLVWEVNSRRVWGGCESGEIIVWNAENGNQIFR) and 1778-1820 (LHPG…LDDQ). Residues 1821–1923 (SGTKSDFITK…WLTAINRVIN (103 aa)) enclose the PH domain. The WD 4 repeat unit spans residues 2031 to 2068 (HYSKPITSMALVEKNVWISCEDESLSVWDGDTGSFIRK).

It belongs to the protein kinase superfamily. TKL Ser/Thr protein kinase family. ROCO subfamily.

It is found in the membrane. It catalyses the reaction L-seryl-[protein] + ATP = O-phospho-L-seryl-[protein] + ADP + H(+). It carries out the reaction L-threonyl-[protein] + ATP = O-phospho-L-threonyl-[protein] + ADP + H(+). Its function is as follows. May act as a serine/threonine-protein kinase and guanine-nucleotide releasing factor. The sequence is that of Probable serine/threonine-protein kinase roco6 (roco6) from Dictyostelium discoideum (Social amoeba).